We begin with the raw amino-acid sequence, 1363 residues long: Clustered mitochondria protein homolog (1363 aa).

TPR repeat units lie at residues 29–63 (LPSF…IVLC) and 120–154 (KEKS…DIGS). The disordered stretch occupies residues 172 to 191 (KEAKKEESTEKEQQEKEELS). The TPR 3 repeat unit spans residues 283-316 (STINFNPTIKINEKGKFNKSYLLYDLVCQLSPLF). Residues 361 to 631 (DLSRSQLSSL…RTTPRDIEFI (271 aa)) form the Clu domain. The interval 521–544 (PVITSPTTDAEGKNEAEEPESEPV) is disordered. One copy of the TPR 4 repeat lies at 548–581 (VYGLSSDGSRILEDKSFEEPLKQIGDFFHLKPHK). Basic and acidic residues predominate over residues 799-832 (AKAEKKREEEKEKEEKEATESEDKKEKKEDKEDA). The disordered stretch occupies residues 799-844 (AKAEKKREEEKEKEEKEATESEDKKEKKEDKEDAEKEEAEAEEEVP). Residues 833–842 (EKEEAEAEEE) are compositionally biased toward acidic residues. 4 TPR repeats span residues 1057-1090 (VEEI…NESI), 1141-1174 (ITAY…WSLV), 1183-1216 (INTL…TKKL), and 1225-1258 (GFIY…FMKL). Residues 1291–1363 (QQETQKKSKT…SGSKKSNKKK (73 aa)) are disordered. The span at 1330-1342 (PPQSNPEIANQSI) shows a compositional bias: polar residues.

Belongs to the CLU family. May associate with the eukaryotic translation initiation factor 3 (eIF-3) complex.

The protein resides in the cytoplasm. In terms of biological role, mRNA-binding protein involved in proper cytoplasmic distribution of mitochondria. In Candida albicans (strain SC5314 / ATCC MYA-2876) (Yeast), this protein is Clustered mitochondria protein homolog.